We begin with the raw amino-acid sequence, 215 residues long: Large ribosomal subunit protein uL3 (215 aa).

A disordered region spans residues 124–164; that stretch reads KRHGFSRGPMTHGSKNHREPGSTGAGTTPGRIYPGKRMAGR.

The protein belongs to the universal ribosomal protein uL3 family. As to quaternary structure, part of the 50S ribosomal subunit. Forms a cluster with proteins L14 and L19.

In terms of biological role, one of the primary rRNA binding proteins, it binds directly near the 3'-end of the 23S rRNA, where it nucleates assembly of the 50S subunit. The protein is Large ribosomal subunit protein uL3 of Synechococcus sp. (strain RCC307).